Reading from the N-terminus, the 138-residue chain is Large ribosomal subunit protein uL16 (138 aa).

The span at 1 to 19 shows a compositional bias: basic residues; sequence MLIPKRVKYRRQHRPHRSG. Positions 1-24 are disordered; it reads MLIPKRVKYRRQHRPHRSGVSKGG.

This sequence belongs to the universal ribosomal protein uL16 family. In terms of assembly, part of the 50S ribosomal subunit.

Binds 23S rRNA and is also seen to make contacts with the A and possibly P site tRNAs. The sequence is that of Large ribosomal subunit protein uL16 from Corynebacterium jeikeium (strain K411).